We begin with the raw amino-acid sequence, 116 residues long: Beta-2-microglobulin (116 aa).

The N-terminal stretch at 1 to 19 (MRAIITFALFCVLYVTVQG) is a signal peptide. The Ig-like C1-type domain maps to 24–110 (PKVQVYSHFP…VRHMNNKNIY (87 aa)). A disulfide bridge links Cys-44 with Cys-99.

This sequence belongs to the beta-2-microglobulin family. As to quaternary structure, heterodimer of an alpha chain and a beta chain. Beta-2-microglobulin is the beta-chain of major histocompatibility complex class I molecules.

The protein localises to the secreted. Functionally, component of the class I major histocompatibility complex (MHC). Involved in the presentation of peptide antigens to the immune system. This is Beta-2-microglobulin (b2m) from Cyprinus carpio (Common carp).